A 275-amino-acid polypeptide reads, in one-letter code: 3-methyl-2-oxobutanoate hydroxymethyltransferase (275 aa).

Positions 49 and 88 each coordinate Mg(2+). 3-methyl-2-oxobutanoate-binding positions include 49-50 (DS), aspartate 88, and lysine 118. Glutamate 120 is a binding site for Mg(2+). The active-site Proton acceptor is the glutamate 187.

The protein belongs to the PanB family. In terms of assembly, homodecamer; pentamer of dimers. Mg(2+) is required as a cofactor.

It localises to the cytoplasm. It carries out the reaction 3-methyl-2-oxobutanoate + (6R)-5,10-methylene-5,6,7,8-tetrahydrofolate + H2O = 2-dehydropantoate + (6S)-5,6,7,8-tetrahydrofolate. It functions in the pathway cofactor biosynthesis; (R)-pantothenate biosynthesis; (R)-pantoate from 3-methyl-2-oxobutanoate: step 1/2. Catalyzes the reversible reaction in which hydroxymethyl group from 5,10-methylenetetrahydrofolate is transferred onto alpha-ketoisovalerate to form ketopantoate. This is 3-methyl-2-oxobutanoate hydroxymethyltransferase from Nitrobacter hamburgensis (strain DSM 10229 / NCIMB 13809 / X14).